A 360-amino-acid polypeptide reads, in one-letter code: MVDKMNLEEWMRPSIRTLKAYESKSIPDCVRLDANENPLPWPPGMIEQLLGSAIAFNRYPDGGAQELKEALSRYTGVPAEGILTGNGSDELIQLLMTTFGGEKGAVVIHPPTFSMYEAAARVTGTEVLEVPLLLTETSRDFRLDVEGILKAAAQPQVHMIVLCNPNNPTGTLFPREEILRIVAESGKIVIVDEAYGEFSGESVVDQIPYCPNLLVMKTFSKLFAMAALRLGYLLGQPSIIGALNRARQPFNVNSFSQKAGVIALNYGEEYAEQGRILIAELARIAEALTAFASVKVFATRANFLLFQPEDPDRVYQELIGKGFLIRTMGNLPLVGKALRLSTGLPEENERLIKALGEILK.

Lys221 carries the post-translational modification N6-(pyridoxal phosphate)lysine.

The protein belongs to the class-II pyridoxal-phosphate-dependent aminotransferase family. Histidinol-phosphate aminotransferase subfamily. In terms of assembly, homodimer. Requires pyridoxal 5'-phosphate as cofactor.

The enzyme catalyses L-histidinol phosphate + 2-oxoglutarate = 3-(imidazol-4-yl)-2-oxopropyl phosphate + L-glutamate. It participates in amino-acid biosynthesis; L-histidine biosynthesis; L-histidine from 5-phospho-alpha-D-ribose 1-diphosphate: step 7/9. This chain is Histidinol-phosphate aminotransferase, found in Desulfitobacterium hafniense (strain DSM 10664 / DCB-2).